The chain runs to 265 residues: Transcription factor BHLH089 (265 aa).

A disordered region spans residues 1 to 132 (MDPAPTLAAE…PPPPEPPKQD (132 aa)). 2 stretches are compositionally biased toward gly residues: residues 17–29 (LGGG…GGRG) and 44–53 (SRGGGGGGGA). A compositionally biased stretch (polar residues) spans 95-105 (SKSSGDNSSLR). Residues 142–155 (QATDSHSLAERARR) form a basic motif; degenerate region. One can recognise a bHLH domain in the interval 142–192 (QATDSHSLAERARREKISERMKILQDLVPGCNKVIGKASVLDEIINYIQAL). The interval 156–192 (EKISERMKILQDLVPGCNKVIGKASVLDEIINYIQAL) is helix-loop-helix motif.

It belongs to the bHLH protein family. In terms of assembly, interacts with RSS3.

The protein resides in the nucleus. In terms of biological role, transcription factor that may regulate jasmonate-regulated genes. This Oryza sativa subsp. japonica (Rice) protein is Transcription factor BHLH089.